Here is a 267-residue protein sequence, read N- to C-terminus: MNKTRYRLDVAYDGANFCGWAPQPGLRTVGGLILDALRLICSEPPDIVIAARTDAGVHALQQVCHVDLISSPDPVWLLHRLRSLLKSETDLHILSAVKAPVNFHARFSAIGRRYVYRVIDKRSSWYPQNRYFVYRVNAFLQDYRMRRAASGLIGLKDFGAFCKPRRMGSTVRHLRQFEVIRQPDGQIHFFLESDAFCHSMVRNLVGSLIEVGRGALTLQDLFCYTKIAKRTPKIPTLPPHALTLIGIDYPQEHLFECQNRKTRQKRT.

Asp54 acts as the Nucleophile in catalysis. A substrate-binding site is contributed by Tyr114.

Belongs to the tRNA pseudouridine synthase TruA family. Homodimer.

It carries out the reaction uridine(38/39/40) in tRNA = pseudouridine(38/39/40) in tRNA. In terms of biological role, formation of pseudouridine at positions 38, 39 and 40 in the anticodon stem and loop of transfer RNAs. The sequence is that of tRNA pseudouridine synthase A from Tropheryma whipplei (strain TW08/27) (Whipple's bacillus).